A 75-amino-acid polypeptide reads, in one-letter code: Exodeoxyribonuclease 7 small subunit (75 aa).

This sequence belongs to the XseB family. As to quaternary structure, heterooligomer composed of large and small subunits.

The protein resides in the cytoplasm. It catalyses the reaction Exonucleolytic cleavage in either 5'- to 3'- or 3'- to 5'-direction to yield nucleoside 5'-phosphates.. Bidirectionally degrades single-stranded DNA into large acid-insoluble oligonucleotides, which are then degraded further into small acid-soluble oligonucleotides. This is Exodeoxyribonuclease 7 small subunit from Chlamydia abortus (strain DSM 27085 / S26/3) (Chlamydophila abortus).